A 101-amino-acid chain; its full sequence is Ubiquitin-related modifier 1 homolog (101 aa).

Position 101 is a 1-thioglycine (glycine 101). Glycine 101 participates in a covalent cross-link: Glycyl lysine isopeptide (Gly-Lys) (interchain with K-? in acceptor proteins).

Belongs to the URM1 family. Interacts with cer. C-terminal thiocarboxylation occurs in 2 steps, it is first acyl-adenylated (-COAMP) via the hesA/moeB/thiF part of the MOCS3 homolog, then thiocarboxylated (-COSH) via the rhodanese domain of the MOCS3 homolog.

Its subcellular location is the cytoplasm. The protein operates within tRNA modification; 5-methoxycarbonylmethyl-2-thiouridine-tRNA biosynthesis. In terms of biological role, acts as a sulfur carrier required for 2-thiolation of mcm(5)S(2)U at tRNA wobble positions of cytosolic tRNA(Lys), tRNA(Glu) and tRNA(Gln). Serves as sulfur donor in tRNA 2-thiolation reaction by being thiocarboxylated (-COSH) at its C-terminus by MOCS3. The sulfur is then transferred to tRNA to form 2-thiolation of mcm(5)S(2)U. Also acts as a ubiquitin-like protein (UBL) that is covalently conjugated via an isopeptide bond to lysine residues of target proteins such as Prx2/Jafrac1, Ciao1, Eip71CD and GILT1. The thiocarboxylated form serves as substrate for conjugation and oxidative stress specifically induces the formation of UBL-protein conjugates. This Drosophila erecta (Fruit fly) protein is Ubiquitin-related modifier 1 homolog.